Reading from the N-terminus, the 248-residue chain is Triosephosphate isomerase (248 aa).

Residue 9-11 (NWK) coordinates substrate. The Electrophile role is filled by His94. Residue Glu164 is the Proton acceptor of the active site. Residues Gly170, Ser209, and 230–231 (GG) each bind substrate.

This sequence belongs to the triosephosphate isomerase family. As to quaternary structure, homodimer.

It is found in the cytoplasm. The catalysed reaction is D-glyceraldehyde 3-phosphate = dihydroxyacetone phosphate. Its pathway is carbohydrate biosynthesis; gluconeogenesis. It participates in carbohydrate degradation; glycolysis; D-glyceraldehyde 3-phosphate from glycerone phosphate: step 1/1. Its function is as follows. Involved in the gluconeogenesis. Catalyzes stereospecifically the conversion of dihydroxyacetone phosphate (DHAP) to D-glyceraldehyde-3-phosphate (G3P). The polypeptide is Triosephosphate isomerase (Hahella chejuensis (strain KCTC 2396)).